We begin with the raw amino-acid sequence, 195 residues long: MRQAEVTRDTLETRITARVDLDGSGKAAFATGVPFLDHMLDQIARHGAFDLDIRAEGDTHIDDHHTVEDVGITLGQAFARALGDKRGIRRYGHAYVPLDEALSRVVVDFSGRPGLHYFVSYTRARIGSFDVDLAREFFQGFVNHAGVTLHIDSLRGDNAHHQCETIFKAFGRALRMAAERDERAAGAIPSTKGAL.

This sequence belongs to the imidazoleglycerol-phosphate dehydratase family.

The protein resides in the cytoplasm. It carries out the reaction D-erythro-1-(imidazol-4-yl)glycerol 3-phosphate = 3-(imidazol-4-yl)-2-oxopropyl phosphate + H2O. Its pathway is amino-acid biosynthesis; L-histidine biosynthesis; L-histidine from 5-phospho-alpha-D-ribose 1-diphosphate: step 6/9. The protein is Imidazoleglycerol-phosphate dehydratase of Aromatoleum aromaticum (strain DSM 19018 / LMG 30748 / EbN1) (Azoarcus sp. (strain EbN1)).